Here is a 328-residue protein sequence, read N- to C-terminus: AA9 family lytic polysaccharide monooxygenase A (328 aa).

The signal sequence occupies residues 1-21; the sequence is MPSTKVAALSAVLALASTVAG. Histidine 22 contacts Cu(2+). Methylhistidine is present on histidine 22. Intrachain disulfides connect cysteine 77-cysteine 199 and cysteine 118-cysteine 122. N-linked (GlcNAc...) asparagine glycosylation occurs at asparagine 80. A Cu(2+)-binding site is contributed by histidine 107. N-linked (GlcNAc...) asparagine glycans are attached at residues asparagine 121 and asparagine 159. Histidine 185 and glutamine 194 together coordinate O2. Position 196 (tyrosine 196) interacts with Cu(2+). Serine 235 and serine 237 each carry an O-linked (Man...) serine glycan. Threonine 238 and threonine 245 each carry an O-linked (Man...) threonine glycan.

This sequence belongs to the polysaccharide monooxygenase AA9 family. Cu(2+) is required as a cofactor. In terms of processing, the catalytically essential N-terminal histidine His-22 is post-translationally modified by methylation to prevent protonation of the histidine side chain, and protect the critical active site of the enzyme from oxidative damage.

It localises to the secreted. The enzyme catalyses [(1-&gt;4)-beta-D-glucosyl]n+m + reduced acceptor + O2 = 4-dehydro-beta-D-glucosyl-[(1-&gt;4)-beta-D-glucosyl]n-1 + [(1-&gt;4)-beta-D-glucosyl]m + acceptor + H2O.. Functionally, lytic polysaccharide monooxygenase (LPMO) that depolymerizes crystalline and amorphous polysaccharides via the oxidation of scissile alpha- or beta-(1-4)-glycosidic bonds, yielding C1 and C4 oxidation products. Catalysis by LPMOs requires the reduction of the active-site copper from Cu(II) to Cu(I) by a reducing agent and H(2)O(2) or O(2) as a cosubstrate. Shows activity on cellulosic substrates (Avicel, carboxymethylcellulose) and xylan. In Talaromyces verruculosus (Penicillium verruculosum), this protein is AA9 family lytic polysaccharide monooxygenase A.